The primary structure comprises 1413 residues: ABC-type transporter vrcC (1413 aa).

Positions 108–365 (VWFEALALAR…FLDMGFACPE (258 aa)) constitute an ABC transporter 1 domain. Asn289 carries an N-linked (GlcNAc...) asparagine glycan. A helical membrane pass occupies residues 476-496 (VTISSLIGNVITALVIASIFY). Asn501 is a glycosylation site (N-linked (GlcNAc...) asparagine). A run of 2 helical transmembrane segments spans residues 510 to 530 (ALLF…MLTL) and 564 to 584 (VLNA…VLLG). Residue Asn675 is glycosylated (N-linked (GlcNAc...) asparagine). The helical transmembrane segment at 683–703 (IGIILAFMVVLGAIYLVATDF) threads the bilayer. The disordered stretch occupies residues 725-748 (SGKPDDFEGGSDRNASQEKSKSDR). N-linked (GlcNAc...) asparagine glycosylation is present at Asn738. The segment covering 739–748 (ASQEKSKSDR) has biased composition (basic and acidic residues). The region spanning 761-1003 (FQWQDVCFDI…ILIDYFVRNG (243 aa)) is the ABC transporter 2 domain. Transmembrane regions (helical) follow at residues 1105-1125 (IYIY…GFSL), 1142-1162 (IFLL…HFVT), 1191-1211 (LFWN…PIGM), 1230-1250 (LLIW…IAAL), 1266-1286 (LCLL…FWIF), and 1290-1310 (VSPF…DTTV). Asn1324 carries an N-linked (GlcNAc...) asparagine glycan. A helical transmembrane segment spans residues 1378–1398 (FGLMWVFIFTNIVAACLLYWW).

It belongs to the ABC transporter superfamily. ABCG family. PDR (TC 3.A.1.205) subfamily.

The protein resides in the cell membrane. Functionally, ABC-type transporter; part of the gene cluster that mediates the biosynthesis of the sesterterpene variecolin. VrcC is probably involved in the secretion of variecolin. In Aspergillus aculeatus (strain ATCC 16872 / CBS 172.66 / WB 5094), this protein is ABC-type transporter vrcC.